Reading from the N-terminus, the 202-residue chain is T-cell surface glycoprotein CD3 epsilon chain (202 aa).

Positions 1 to 21 are cleaved as a signal peptide; it reads MPSGSLWRVLGLCLLSVGAWG. Residues 22 to 125 lie on the Extracellular side of the membrane; sequence QEDNEDPLEP…NCVEVDTMTA (104 aa). An Ig-like domain is found at 33 to 107; sequence PQTSASARYK…TSNSLEKNYL (75 aa). Cysteine 54 and cysteine 96 are oxidised to a cystine. Residues 126–146 traverse the membrane as a helical segment; sequence VAIVVADVCITLGFLLLVYYW. The Cytoplasmic portion of the chain corresponds to 147–202; the sequence is SKNKKASSVTMMRGPGAGGRPRGQNKEKPPPVPNPDYEPIRKGQQDLYSGLNQRGI. The disordered stretch occupies residues 156–202; that stretch reads TMMRGPGAGGRPRGQNKEKPPPVPNPDYEPIRKGQQDLYSGLNQRGI. Residues 170–187 are NUMB-binding region; it reads QNKEKPPPVPNPDYEPIR. An ITAM domain is found at 173–200; the sequence is EKPPPVPNPDYEPIRKGQQDLYSGLNQR. Residues 174-181 form a proline-rich sequence region; sequence KPPPVPNP. Phosphotyrosine is present on residues tyrosine 183 and tyrosine 194. A compositionally biased stretch (polar residues) spans 192–202; sequence DLYSGLNQRGI.

In terms of assembly, the TCR-CD3 complex is composed of a CD3D/CD3E and a CD3G/CD3E heterodimers that preferentially associate with TCRalpha and TCRbeta, respectively, to form TCRalpha/CD3E/CD3G and TCRbeta/CD3G/CD3E trimers. In turn, the hexamer interacts with CD3Z homodimer to form the TCR-CD3 complex. Alternatively, TCRalpha and TCRbeta can be replaced by TCRgamma and TCRdelta. Interacts with CD6. Interacts (via Proline-rich sequence) with NCK1; the interaction is ligand dependent but independent of tyrosine kinase activation. In terms of processing, phosphorylated on Tyr residues after T-cell receptor triggering by LCK in association with CD4/CD8.

It is found in the cell membrane. Functionally, part of the TCR-CD3 complex present on T-lymphocyte cell surface that plays an essential role in adaptive immune response. When antigen presenting cells (APCs) activate T-cell receptor (TCR), TCR-mediated signals are transmitted across the cell membrane by the CD3 chains CD3D, CD3E, CD3G and CD3Z. All CD3 chains contain immunoreceptor tyrosine-based activation motifs (ITAMs) in their cytoplasmic domain. Upon TCR engagement, these motifs become phosphorylated by Src family protein tyrosine kinases LCK and FYN, resulting in the activation of downstream signaling pathways. In addition of this role of signal transduction in T-cell activation, CD3E plays an essential role in correct T-cell development. Also participates in internalization and cell surface down-regulation of TCR-CD3 complexes via endocytosis sequences present in CD3E cytosolic region. In addition to its role as a TCR coreceptor, it serves as a receptor for ITPRIPL1. Ligand recognition inhibits T-cell activation by promoting interaction with NCK1, which prevents CD3E-ZAP70 interaction and blocks the ERK-NFkB signaling cascade and calcium influx. In Felis catus (Cat), this protein is T-cell surface glycoprotein CD3 epsilon chain (CD3E).